Consider the following 415-residue polypeptide: MLQKTVLLLALVAQVLMLENGLLRTPPMGWLAWERFRCNINCEEDPKNCISERLFMEMADRLAQDGWRDLGYVYLNIDDCWIGGRDATGRLIPDPKRFPHGIAFLADYAHSLGLKLGIYEDMGKMTCMGYPGTTLDKVELDAATFAEWKVDMLKLDGCYSTPKERAEGYPKMAAALNATGRPIAFSCSWPAYEGGLPPKVNYTEVAGTCNLWRNYKDIQDSWKSVLSILDWFVKHQDILQPVSGPGHWNDPDMLLIGNFGLSFDESRAQMALWTVLAAPLFMSTDLRTISPQNIDILQNPLLIKINQDPLGIQGRLIFKSKSHIEVFKRNLSDDASALVFFSRRTDMPYHFHCSLLELNYPKGSVYEGQNVFTGDIISGLHPETNFTVIINPSGVVMWYLYPVKGLGIYTMMSQL.

The N-terminal stretch at 1–17 is a signal peptide; that stretch reads MLQKTVLLLALVAQVLM. Intrachain disulfides connect C38/C80, C42/C49, and C127/C158. Substrate contacts are provided by residues 78 to 79 and K154; that span reads DD. D156 serves as the catalytic Nucleophile. N177 carries N-linked (GlcNAc...) asparagine glycosylation. Cysteines 187 and 209 form a disulfide. S188 contacts substrate. N201 is a glycosylation site (N-linked (GlcNAc...) asparagine). Positions 213 and 217 each coordinate substrate. The active-site Proton donor is the D217. At S322 the chain carries Phosphoserine. The N-linked (GlcNAc...) asparagine glycan is linked to N330. A Phosphoserine modification is found at S332. Residue N385 is glycosylated (N-linked (GlcNAc...) asparagine).

It belongs to the glycosyl hydrolase 27 family. In terms of assembly, homodimer.

It localises to the lysosome. It carries out the reaction Cleavage of non-reducing alpha-(1-&gt;3)-N-acetylgalactosamine residues from human blood group A and AB mucin glycoproteins, Forssman hapten and blood group A lacto series glycolipids.. The catalysed reaction is a neolactoside IV(3)-alpha-GalNAc,IV(2)-alpha-Fuc-nLc4Cer(d18:1(4E)) + H2O = a neolactoside IV(2)-alpha-Fuc-nLc4Cer(d18:1(4E)) + N-acetyl-alpha-D-galactosamine. The enzyme catalyses a neolactoside IV(3)-alpha-GalNAc,IV(2)-alpha-Fuc-nLc4Cer(d18:0) + H2O = a neolactoside IV(2)-alpha-Fuc-nLc4Cer(d18:0) + N-acetyl-alpha-D-galactosamine. It catalyses the reaction a globoside IV3GalNAc-Gb4Cer + H2O = N-acetyl-alpha-D-galactosamine + a globoside Gb4Cer. In terms of biological role, removes terminal alpha-N-acetylgalactosamine residues from glycolipids and glycopeptides. Required for the breakdown of glycolipids. The chain is Alpha-N-acetylgalactosaminidase (Naga) from Rattus norvegicus (Rat).